A 236-amino-acid polypeptide reads, in one-letter code: UPF0257 lipoprotein YnfC (236 aa).

A signal peptide spans 1–16; it reads MKYKLLPCLLAILLTG. Cys17 carries the N-palmitoyl cysteine lipid modification. A lipid anchor (S-diacylglycerol cysteine) is attached at Cys17.

The protein belongs to the UPF0257 family.

It localises to the cell membrane. The chain is UPF0257 lipoprotein YnfC from Escherichia coli O157:H7.